The following is a 426-amino-acid chain: D-tagatose-1,6-bisphosphate aldolase subunit KbaZ (426 aa).

It belongs to the GatZ/KbaZ family. KbaZ subfamily. As to quaternary structure, forms a complex with KbaY.

It participates in carbohydrate metabolism; D-tagatose 6-phosphate degradation; D-glyceraldehyde 3-phosphate and glycerone phosphate from D-tagatose 6-phosphate: step 2/2. Its function is as follows. Component of the tagatose-1,6-bisphosphate aldolase KbaYZ that is required for full activity and stability of the Y subunit. Could have a chaperone-like function for the proper and stable folding of KbaY. When expressed alone, KbaZ does not show any aldolase activity. In Escherichia coli O17:K52:H18 (strain UMN026 / ExPEC), this protein is D-tagatose-1,6-bisphosphate aldolase subunit KbaZ.